Reading from the N-terminus, the 453-residue chain is Ribosomal protein uS12 methylthiotransferase RimO (453 aa).

Residues 5–120 (PKVGFVSLGC…VMQAVHSHLP (116 aa)) form the MTTase N-terminal domain. [4Fe-4S] cluster-binding residues include Cys-14, Cys-50, Cys-79, Cys-151, Cys-155, and Cys-158. The region spanning 137–382 (LTPRHYAYLK…MEVAEEVSAN (246 aa)) is the Radical SAM core domain. Residues 385 to 453 (QRKVGKTLKV…ADGHDLWGEV (69 aa)) form the TRAM domain.

The protein belongs to the methylthiotransferase family. RimO subfamily. Requires [4Fe-4S] cluster as cofactor.

It localises to the cytoplasm. The enzyme catalyses L-aspartate(89)-[ribosomal protein uS12]-hydrogen + (sulfur carrier)-SH + AH2 + 2 S-adenosyl-L-methionine = 3-methylsulfanyl-L-aspartate(89)-[ribosomal protein uS12]-hydrogen + (sulfur carrier)-H + 5'-deoxyadenosine + L-methionine + A + S-adenosyl-L-homocysteine + 2 H(+). Catalyzes the methylthiolation of an aspartic acid residue of ribosomal protein uS12. The protein is Ribosomal protein uS12 methylthiotransferase RimO of Burkholderia cenocepacia (strain HI2424).